Consider the following 145-residue polypeptide: Lysozyme-like protein 4 (145 aa).

The signal sequence occupies residues 1-19 (MKASVVLSLIGYLVVPSDT). In terms of domain architecture, C-type lysozyme spans 20–145 (AVLGRCVVAK…LARWLDGCKL (126 aa)). Cystine bridges form between Cys-25–Cys-143, Cys-49–Cys-130, Cys-84–Cys-95, and Cys-91–Cys-109. Residue Glu-54 is part of the active site.

It belongs to the glycosyl hydrolase 22 family. Monomer.

The protein resides in the secreted. Its subcellular location is the cytoplasmic vesicle. The protein localises to the secretory vesicle. It is found in the acrosome. It localises to the cell projection. The protein resides in the cilium. Its subcellular location is the flagellum. May be involved in fertilization. Has no detectable bacteriolytic and lysozyme activities in vitro. The chain is Lysozyme-like protein 4 (LYZL4) from Bos taurus (Bovine).